The primary structure comprises 354 residues: MNTFGRKLTLTTFGESHGAAIGGVIDGFPAGVRIDTQFLQSELDRRRPGRNKFATARDEADRAEILSGVFEGVSSGAPIAFVILNQNQKSNDYENLREIFRPGHADFTYFKKFGIRDHRGGGRVSARETAVRVAGGAFAQMLLNEFGVSVKSGVLSVADVVAGEPDFDLASKSEIYSLGNEDAMKSLIMKAREQHDSVGASVLSVVDGAPTGLGEGLYYKLDAVLAAALMGINGVKAVEIGEGVNASRLFGSQNNDEMSEQGFLSNHAGGILGGISTGERIVLKSHFKPTPSIFKAQKTQNLKGECVEFELRGRHDPCIGVRGSVVATAMIRLVICDMMLLNLGSNLANLKKFY.

R46 contacts NADP(+). FMN is bound by residues R123–S125, N233–G234, G273, K288–S292, and R314.

It belongs to the chorismate synthase family. In terms of assembly, homotetramer. The cofactor is FMNH2.

The catalysed reaction is 5-O-(1-carboxyvinyl)-3-phosphoshikimate = chorismate + phosphate. Its pathway is metabolic intermediate biosynthesis; chorismate biosynthesis; chorismate from D-erythrose 4-phosphate and phosphoenolpyruvate: step 7/7. In terms of biological role, catalyzes the anti-1,4-elimination of the C-3 phosphate and the C-6 proR hydrogen from 5-enolpyruvylshikimate-3-phosphate (EPSP) to yield chorismate, which is the branch point compound that serves as the starting substrate for the three terminal pathways of aromatic amino acid biosynthesis. This reaction introduces a second double bond into the aromatic ring system. This Campylobacter curvus (strain 525.92) protein is Chorismate synthase.